We begin with the raw amino-acid sequence, 481 residues long: Glutamate--tRNA ligase (481 aa).

A 'HIGH' region motif is present at residues 10–20 (PSPTGHLHIGN). A 'KMSKS' region motif is present at residues 251 to 255 (KLSKR). An ATP-binding site is contributed by lysine 254.

The protein belongs to the class-I aminoacyl-tRNA synthetase family. Glutamate--tRNA ligase type 1 subfamily. In terms of assembly, monomer.

The protein resides in the cytoplasm. The catalysed reaction is tRNA(Glu) + L-glutamate + ATP = L-glutamyl-tRNA(Glu) + AMP + diphosphate. Its function is as follows. Catalyzes the attachment of glutamate to tRNA(Glu) in a two-step reaction: glutamate is first activated by ATP to form Glu-AMP and then transferred to the acceptor end of tRNA(Glu). This chain is Glutamate--tRNA ligase, found in Exiguobacterium sibiricum (strain DSM 17290 / CCUG 55495 / CIP 109462 / JCM 13490 / 255-15).